The following is a 294-amino-acid chain: 4-hydroxy-tetrahydrodipicolinate synthase (294 aa).

Threonine 45 is a pyruvate binding site. Tyrosine 133 serves as the catalytic Proton donor/acceptor. Catalysis depends on lysine 161, which acts as the Schiff-base intermediate with substrate. A pyruvate-binding site is contributed by isoleucine 203.

Belongs to the DapA family. As to quaternary structure, homotetramer; dimer of dimers.

It is found in the cytoplasm. It catalyses the reaction L-aspartate 4-semialdehyde + pyruvate = (2S,4S)-4-hydroxy-2,3,4,5-tetrahydrodipicolinate + H2O + H(+). It participates in amino-acid biosynthesis; L-lysine biosynthesis via DAP pathway; (S)-tetrahydrodipicolinate from L-aspartate: step 3/4. Functionally, catalyzes the condensation of (S)-aspartate-beta-semialdehyde [(S)-ASA] and pyruvate to 4-hydroxy-tetrahydrodipicolinate (HTPA). The polypeptide is 4-hydroxy-tetrahydrodipicolinate synthase (Shewanella pealeana (strain ATCC 700345 / ANG-SQ1)).